Here is a 232-residue protein sequence, read N- to C-terminus: MNAVNLMARPEALTFAPEQSALIVVDMQNAYASQGGYLDLAGFDVSTTAPVIENIKTAVAAAREAGMTIVWFQNGWDSDYLEAGGPGSPNFHKSNALKTMRRRPELHGKLLAKGGWDYQLVDELTPLPGDIVLPKPRYSGFFNTPLDSMLRARNIRHLVFTGIATNVCVESTLRDGFFLEYFGVVLEDATHQAGPPFAQQAALFNIETFFGWVSDVQRFCDALSPAALARIA.

Catalysis depends on Asp26, which acts as the Proton acceptor. Lys135 is a catalytic residue. Cys168 acts as the Nucleophile in catalysis.

This sequence belongs to the isochorismatase family. RutB subfamily.

It catalyses the reaction (Z)-3-ureidoacrylate + H2O + H(+) = (Z)-3-aminoacrylate + NH4(+) + CO2. It carries out the reaction (Z)-3-ureidoacrylate + H2O = (Z)-3-aminoacrylate + carbamate + H(+). The catalysed reaction is (Z)-2-methylureidoacrylate + H2O + H(+) = (Z)-2-methylaminoacrylate + NH4(+) + CO2. Hydrolyzes ureidoacrylate to form aminoacrylate and carbamate. The carbamate hydrolyzes spontaneously, thereby releasing one of the nitrogen atoms of the pyrimidine ring as ammonia and one of its carbon atoms as CO2. The sequence is that of Ureidoacrylate amidohydrolase RutB from Cronobacter turicensis (strain DSM 18703 / CCUG 55852 / LMG 23827 / z3032).